Here is a 1020-residue protein sequence, read N- to C-terminus: DNA-directed RNA polymerase 2, chloroplastic/mitochondrial (1020 aa).

A disordered region spans residues 314–336 (KKQKAEKDKQKEDGEHVTQEQEK). Residues aspartate 721, lysine 796, and aspartate 953 contribute to the active site.

Belongs to the phage and mitochondrial RNA polymerase family. In terms of tissue distribution, the highest levels of expression are detected in the mature leaves. The level of expression is lowest in the cotyledons.

The protein resides in the plastid. Its subcellular location is the chloroplast. The protein localises to the mitochondrion. The catalysed reaction is RNA(n) + a ribonucleoside 5'-triphosphate = RNA(n+1) + diphosphate. DNA-dependent RNA polymerase catalyzes the transcription of DNA into RNA using the four ribonucleoside triphosphates as substrates. The protein is DNA-directed RNA polymerase 2, chloroplastic/mitochondrial (RPOT2) of Nicotiana sylvestris (Wood tobacco).